A 233-amino-acid polypeptide reads, in one-letter code: Octanoyltransferase (233 aa).

The 182-residue stretch at N32 to L213 folds into the BPL/LPL catalytic domain. Substrate is bound by residues R77–H84, A144–G146, and G157–A159. C175 serves as the catalytic Acyl-thioester intermediate.

The protein belongs to the LipB family.

It localises to the cytoplasm. The enzyme catalyses octanoyl-[ACP] + L-lysyl-[protein] = N(6)-octanoyl-L-lysyl-[protein] + holo-[ACP] + H(+). The protein operates within protein modification; protein lipoylation via endogenous pathway; protein N(6)-(lipoyl)lysine from octanoyl-[acyl-carrier-protein]: step 1/2. Functionally, catalyzes the transfer of endogenously produced octanoic acid from octanoyl-acyl-carrier-protein onto the lipoyl domains of lipoate-dependent enzymes. Lipoyl-ACP can also act as a substrate although octanoyl-ACP is likely to be the physiological substrate. This is Octanoyltransferase from Clostridium kluyveri (strain ATCC 8527 / DSM 555 / NBRC 12016 / NCIMB 10680 / K1).